The sequence spans 962 residues: Splicing regulator ARVCF (962 aa).

Residues 11–46 adopt a coiled-coil conformation; it reads SILASVKEQEARFERLTRALEQERRHVALQLERAQQ. Positions 95 to 123 are disordered; sequence VTVEEDPGTPTSHVSIVTSEDGTTRRTET. Phosphothreonine occurs at positions 103 and 105. The segment covering 103–115 has biased composition (polar residues); sequence TPTSHVSIVTSED. Position 171 is an omega-N-methylarginine (Arg171). Disordered regions lie at residues 233 to 255, 268 to 291, and 322 to 357; these read GRRE…LPEH, RSLA…TRRR, and AATA…EPRW. The residue at position 269 (Ser269) is a Phosphoserine. Residues 272 to 282 are compositionally biased toward acidic residues; the sequence is ADDEGGPDLEP. Ser334, Ser337, Ser345, and Ser347 each carry phosphoserine. ARM repeat units lie at residues 350-389, 392-431, 435-469, 470-510, 528-567, and 577-623; these read STRK…HLCF, EGIK…NLSY, TDNK…VTGT, LWNL…NEDS, LRNV…DTDN, and MRNL…GKKA. The interval 593 to 618 is disordered; sequence RYQEAEPGIPGSTTSQRRRKDDASCF. Ser607 carries the phosphoserine modification. The Nuclear localization signal motif lies at 608–624; it reads QRRRKDDASCFGGKKAK. Residue Thr643 is modified to Phosphothreonine. ARM repeat units follow at residues 647–687, 700–739, 740–782, and 783–827; these read PKRT…AAGA, TYIR…NLSL, DQRN…AVLN, and TIHE…SHVL. Residues 777 to 962 form a required for interaction with RNA-binding proteins DDX5, HNRNPH2 and SRSF1 and with mRNAs region; that stretch reads VVAVLNTIHE…TKPQPVDSWV (186 aa). The segment at 844 to 962 is disordered; it reads GWTKSRFQSA…TKPQPVDSWV (119 aa). 2 positions are modified to phosphoserine: Ser864 and Ser871. Thr872 is subject to Phosphothreonine. Composition is skewed to basic and acidic residues over residues 878–887 and 920–932; these read KSLDGEKSNT and TSEK…DPGR.

This sequence belongs to the beta-catenin family. In terms of assembly, component of a ribonucleoprotein complex containing mRNAs and RNA-binding proteins including DDX5, HNRNPH2 and SRSF1 as well as ARVCF. Interacts (via the extreme C-terminus) with FRMPD2 (via the PDZ 2 domain). Interacts with CCDC85B.

The protein localises to the cell junction. It localises to the adherens junction. It is found in the nucleus. The protein resides in the cytoplasm. Functionally, contributes to the regulation of alternative splicing of pre-mRNAs. The sequence is that of Splicing regulator ARVCF (Arvcf) from Mus musculus (Mouse).